We begin with the raw amino-acid sequence, 957 residues long: PE-PGRS family protein PE_PGRS3 (957 aa).

One can recognise a PE domain in the interval 4–94 (VIAAPEVIAA…GAYAAAEAAA (91 aa)). A compositionally biased stretch (basic residues) spans 893–925 (CRRQRRADRQRRQRRQRRQSRGHARCRRHRRAA). Positions 893–957 (CRRQRRADRQ…GISCSPQMMP (65 aa)) are disordered.

Belongs to the mycobacterial PE family. PGRS subfamily. Post-translationally, a cleavage of the protein removes the N-terminal 120-150 residues, immediately upstream the PGRS domain. The exact position of the cleavage site could not be identified.

The protein resides in the cell outer membrane. It localises to the secreted. It is found in the cell wall. Its subcellular location is the cell surface. Functionally, the arginine-rich C-terminal region protrudes from the mycobacterial membrane and mediates M.tuberculosis entry into host epithelial cells. May serve as a bridge between mycobacteria and host cells by interacting with specific host phospholipids and extracting them from host cells, for their direct integration or as a source of phosphate, during phases of TB pathogenesis when M.tuberculosis is short of phosphate supply. The sequence is that of PE-PGRS family protein PE_PGRS3 from Mycobacterium tuberculosis (strain ATCC 25618 / H37Rv).